A 1512-amino-acid chain; its full sequence is MSVNISTAGKGVDPNTVDTYDSGDDWEIGVGNLIIDLDADLEKDRQKFEMNNSTTTTSSSNSKDCGGPASSGAGATAALADGLKFASVQASAPQGNSHKETSKSKVKRSKTSKDANKSLPSAALYGIPEISSTGKRQEVQGRPGEATGMNSALGQSVSSGGSGNPNSNSTSTSTSAATAGAGSCGKSKEEKPGKSQSSRGAKRDKDAGKSRKDKHDLLQGHQNGSGSQAPSGGHLYGFGAKSNGGGASPFHCGGTGSGSVAAAGEVSKSAPDSGLMGNSMLVKKEEEEEESHRRIKKLKTEKVDPLFTVPAPPPPISSSLTPQILPSYFSPSSSNIAAPVEQLLVRTRSVGVNTCEVGVVTEPECLGPCEPGTSVNLEGIVWHETEEGVLVVNVTWRNKTYVGTLLDCTKHDWAPPRFCESPTSDLEMRGGRGRGKRARSAAAAPGSEASFTESRGLQNKNRGGANGKGRRGSLNASGRRTPPNCAAEDIKASPSSTNKRKNKPPMELDLNSSSEDNKPGKRVRTNSRSTPTTPQGKPETTFLDQGCSSPVLIDCPHPNCNKKYKHINGLRYHQAHAHLDPENKLEFEPDSEDKISDCEEGLSNVALECSEPSTSVSAYDQLKAPASPGAGNPPGTPKGKRELMSNGPGSIIGAKAGKNSGKKKGLNNELNNLPVISNMTAALDSCSAADGSLAAEMPKLEAEGLIDKKNLGDKEKGKKATNCKTDKNLSKLKSARPIAPAPAPTPPQLIAIPTATFTTTTTGTIPGLPSLTTTVVQATPKSPPLKPIQPKPTIMGEPITVNPALVSLKDKKKKEKRKLKDKEGKETGSPKMDAKLGKLEDSKGASKDLPGHFLKDHLNKNEGLANGLSESQESRMASIKAEADKVYTFTDNAPSPSIGSASRLECSTLVNGQAPMAPLHVLTQNGAESSAAKTSSPAYSDISDAADDGGSDSRSEGMRSKASSPSDIISSKDSVVKGHSSTTAQSSQLKESHSPYYHSYDPYYSPSYMHPGQVGAPAAGNSGSTQGMKIKKESEEDAEKKDKAEQLDSKKVDHNSASLQPQHQSVITQRHPALAQSLYYGQYAYGLYMDQKSLMATSPAYRQQYEKYYEDQRLAEQKMAQTGRGDCERKSELPLKELGKEETKQKNMPSATISKAPSTPEPNKNHSKLGPSVPNKTEETGKSQLLSNHQQQLQADSFKAKQMENHQLIKEAVEMKSVMDSMKQTGVDPTSRFKQDPDSRTWHHYVYQPKYLDQQKSEELDREKKLKEDSPRKTPNKESGVPSLPVSLTSIKEEPKEAKHPDSQSMEESKLKNDDRKTPVNWKDSRGTRVAVSSPMSQHQSYIQYLHAYPYPQMYDPSHPAYRAVSPVLMHSYPGAYLSPGFHYPVYGKMSGREETEKVNTSPSVNTKTTTESKALDLLQQHANQYRSKSPAPVEKATAEREREAERERDRHSPFGQRHLHTHHHTHVGMGYPLIPGQYDPFQGLTSAALVASQQVAAQASASGMFPGQRRE.

5 disordered regions span residues 1–23 (MSVN…YDSG), 46–74 (QKFE…SGAG), 89–237 (QASA…HLYG), 260–295 (VAAA…HRRI), and 417–545 (RFCE…FLDQ). Composition is skewed to low complexity over residues 51–74 (NNST…SGAG) and 151–185 (SALG…GSCG). Residues 201 to 218 (AKRDKDAGKSRKDKHDLL) are compositionally biased toward basic and acidic residues. Residues 220–230 (GHQNGSGSQAP) are compositionally biased toward polar residues. A compositionally biased stretch (low complexity) spans 260 to 270 (VAAAGEVSKSA). Positions 278 to 304 (NSMLVKKEEEEEESHRRIKKLKTEKVD) form a coiled coil. Lys283 participates in a covalent cross-link: Glycyl lysine isopeptide (Lys-Gly) (interchain with G-Cter in SUMO2). Phosphoserine is present on residues Ser421 and Ser424. Residues 449–458 (ASFTESRGLQ) are compositionally biased toward polar residues. Residue Thr481 is modified to Phosphothreonine. Ser493 bears the Phosphoserine mark. Polar residues predominate over residues 526-535 (NSRSTPTTPQ). The C2H2-type zinc-finger motif lies at 553-578 (IDCPHPNCNKKYKHINGLRYHQAHAH). 3 disordered regions span residues 622–665 (LKAP…KKKG), 713–750 (DKEK…PQLI), and 777–858 (QATP…KDHL). Ser627 bears the Phosphoserine mark. Basic and acidic residues predominate over residues 713–729 (DKEKGKKATNCKTDKNL). Residues 781–790 (KSPPLKPIQP) show a composition bias toward pro residues. The residue at position 782 (Ser782) is a Phosphoserine. Basic and acidic residues predominate over residues 818–858 (KLKDKEGKETGSPKMDAKLGKLEDSKGASKDLPGHFLKDHL). Lys880 is covalently cross-linked (Glycyl lysine isopeptide (Lys-Gly) (interchain with G-Cter in SUMO2)). Residue Ser895 is modified to Phosphoserine. Polar residues predominate over residues 925 to 934 (NGAESSAAKT). Disordered stretches follow at residues 925 to 996 (NGAE…HSPY) and 1011 to 1066 (PGQV…HQSV). Low complexity predominate over residues 960–973 (SKASSPSDIISSKD). Ser964 bears the Phosphoserine mark. Residues 979 to 989 (HSSTTAQSSQL) are compositionally biased toward polar residues. The span at 1030–1054 (IKKESEEDAEKKDKAEQLDSKKVDH) shows a compositional bias: basic and acidic residues. Positions 1055-1066 (NSASLQPQHQSV) are enriched in polar residues. At Ser1098 the chain carries Phosphoserine. The interval 1117–1192 (QKMAQTGRGD…SQLLSNHQQQ (76 aa)) is disordered. Lys1118 is covalently cross-linked (Glycyl lysine isopeptide (Lys-Gly) (interchain with G-Cter in SUMO2)). The segment covering 1125 to 1145 (GDCERKSELPLKELGKEETKQ) has biased composition (basic and acidic residues). Over residues 1146–1157 (KNMPSATISKAP) the composition is skewed to polar residues. Residues Lys1176 and Lys1182 each participate in a glycyl lysine isopeptide (Lys-Gly) (interchain with G-Cter in SUMO2) cross-link. The segment covering 1183-1192 (SQLLSNHQQQ) has biased composition (low complexity). Glycyl lysine isopeptide (Lys-Gly) (interchain with G-Cter in SUMO2) cross-links involve residues Lys1199, Lys1216, Lys1234, and Lys1250. The tract at residues 1220–1335 (DSMKQTGVDP…RGTRVAVSSP (116 aa)) is disordered. Residues 1231 to 1241 (SRFKQDPDSRT) are compositionally biased toward basic and acidic residues. Basic and acidic residues-rich tracts occupy residues 1253 to 1276 (DQQK…KTPN) and 1291 to 1327 (IKEE…DSRG). Glycyl lysine isopeptide (Lys-Gly) (interchain with G-Cter in SUMO2) cross-links involve residues Lys1292, Lys1310, and Lys1414. A disordered region spans residues 1423-1459 (ANQYRSKSPAPVEKATAEREREAERERDRHSPFGQRH). Positions 1437-1453 (ATAEREREAERERDRHS) are enriched in basic and acidic residues.

Functionally, transcription factor, which represses ZNF609 transcription. This is Zinc finger protein 608 (ZNF608) from Homo sapiens (Human).